Here is a 409-residue protein sequence, read N- to C-terminus: LysM domain-containing GPI-anchored protein LYP6 (409 aa).

A signal peptide spans 1–27 (MAGWPAAEAAGALVVAILAAAAGGAAG). 4 cysteine pairs are disulfide-bonded: Cys-34–Cys-100, Cys-40–Cys-166, Cys-98–Cys-164, and Cys-100–Cys-166. The region spanning 110–160 (VRYSARPADTLASVADVVFAGLASADQIRTANGLSAEDPDAPLDAGATLVV) is the LysM 1 domain. Asn-168 is a glycosylation site (N-linked (GlcNAc...) asparagine). A LysM 2 domain is found at 179-222 (LSYVVRVGDTVQSIAATHATTVTDISNVNAMGSPIVAPGDILAI). 2 disulfides stabilise this stretch: Cys-227-Cys-259 and Cys-254-Cys-282. The N-linked (GlcNAc...) asparagine glycan is linked to Asn-244. Asn-291, Asn-302, and Asn-313 each carry an N-linked (GlcNAc...) asparagine glycan. A disordered region spans residues 353–387 (SPAPGAGEAGGDIPGFPGSSNVSPANGPSGSVSQA). Polar residues predominate over residues 370 to 387 (GSSNVSPANGPSGSVSQA). Residue Ala-387 is the site of GPI-anchor amidated alanine attachment. A propeptide spans 388-409 (ASVNRPHQIVALILSVALYFQM) (removed in mature form).

As to quaternary structure, interacts with LYP4. Interacts with CERK1. Interacts with CEBIP. Expressed in roots and leaves.

Its subcellular location is the cell membrane. Its function is as follows. Functions in innate immunity. Functions as a pattern recognition receptor (PRR), sensing bacterial peptidoglycan (PGN) and fungal chitin at the cell surface. Involved in resistance against the bacterial pathogen Xanthomonas oryzae pv. oryzae (Xoo) and the fungal pathogen Magnaporthe oryzae. Binds PGN and fungal chitin in vitro. Involved in microbe-associated molecular patterns (MAMPs) perception and participates in the activation of defense genes against the bacterial pathogen Xanthomonas oryzae pv. oryzicola (Xoc) or the fungal pathogen Magnaporthe oryzae. This is LysM domain-containing GPI-anchored protein LYP6 from Oryza sativa subsp. japonica (Rice).